We begin with the raw amino-acid sequence, 74 residues long: Conotoxin VnMEKL-0221 (74 aa).

An N-terminal signal peptide occupies residues 1-19 (MEKLTILLLVAAVLMWTQA). A propeptide spanning residues 20-46 (LIQEKRPKEKIKFLSKRKTTAESWWEG) is cleaved from the precursor. 3 disulfides stabilise this stretch: Cys48-Cys62, Cys55-Cys66, and Cys61-Cys71.

This sequence belongs to the conotoxin O2 superfamily. In terms of tissue distribution, expressed by the venom duct.

Its subcellular location is the secreted. In Conus ventricosus (Mediterranean cone), this protein is Conotoxin VnMEKL-0221.